The primary structure comprises 253 residues: 2-C-methyl-D-erythritol 4-phosphate cytidylyltransferase (253 aa).

Belongs to the IspD/TarI cytidylyltransferase family. IspD subfamily.

It catalyses the reaction 2-C-methyl-D-erythritol 4-phosphate + CTP + H(+) = 4-CDP-2-C-methyl-D-erythritol + diphosphate. The protein operates within isoprenoid biosynthesis; isopentenyl diphosphate biosynthesis via DXP pathway; isopentenyl diphosphate from 1-deoxy-D-xylulose 5-phosphate: step 2/6. Functionally, catalyzes the formation of 4-diphosphocytidyl-2-C-methyl-D-erythritol from CTP and 2-C-methyl-D-erythritol 4-phosphate (MEP). This chain is 2-C-methyl-D-erythritol 4-phosphate cytidylyltransferase, found in Chlorobium chlorochromatii (strain CaD3).